A 342-amino-acid polypeptide reads, in one-letter code: 4-hydroxythreonine-4-phosphate dehydrogenase (342 aa).

Residues H139 and T140 each coordinate substrate. A divalent metal cation-binding residues include H174, H219, and H274. Substrate-binding residues include K282, N291, and R300.

The protein belongs to the PdxA family. As to quaternary structure, homodimer. It depends on Zn(2+) as a cofactor. Mg(2+) serves as cofactor. Requires Co(2+) as cofactor.

The protein localises to the cytoplasm. It catalyses the reaction 4-(phosphooxy)-L-threonine + NAD(+) = 3-amino-2-oxopropyl phosphate + CO2 + NADH. It participates in cofactor biosynthesis; pyridoxine 5'-phosphate biosynthesis; pyridoxine 5'-phosphate from D-erythrose 4-phosphate: step 4/5. In terms of biological role, catalyzes the NAD(P)-dependent oxidation of 4-(phosphooxy)-L-threonine (HTP) into 2-amino-3-oxo-4-(phosphooxy)butyric acid which spontaneously decarboxylates to form 3-amino-2-oxopropyl phosphate (AHAP). The chain is 4-hydroxythreonine-4-phosphate dehydrogenase from Mesorhizobium japonicum (strain LMG 29417 / CECT 9101 / MAFF 303099) (Mesorhizobium loti (strain MAFF 303099)).